Here is a 243-residue protein sequence, read N- to C-terminus: Ribosomal RNA small subunit methyltransferase J (243 aa).

S-adenosyl-L-methionine contacts are provided by residues 112–113 (ER) and Asp-164.

This sequence belongs to the methyltransferase superfamily. RsmJ family.

Its subcellular location is the cytoplasm. The catalysed reaction is guanosine(1516) in 16S rRNA + S-adenosyl-L-methionine = N(2)-methylguanosine(1516) in 16S rRNA + S-adenosyl-L-homocysteine + H(+). Its function is as follows. Specifically methylates the guanosine in position 1516 of 16S rRNA. This is Ribosomal RNA small subunit methyltransferase J from Legionella pneumophila subsp. pneumophila (strain Philadelphia 1 / ATCC 33152 / DSM 7513).